Reading from the N-terminus, the 1218-residue chain is Probable cation-transporting ATPase 13A5 (1218 aa).

4 consecutive transmembrane segments (helical) span residues 33-53 (KAFC…VFYW), 222-242 (GYIE…VLSV), 401-421 (FIVF…GVYM), and 433-453 (MALI…LTIG). Aspartate 486 functions as the 4-aspartylphosphate intermediate in the catalytic mechanism. N-linked (GlcNAc...) asparagine glycosylation is found at asparagine 540, asparagine 669, and asparagine 819. Residues aspartate 850 and aspartate 854 each contribute to the Mg(2+) site. A run of 6 helical transmembrane segments spans residues 903–923 (FGVF…ALLL), 940–956 (VAIT…THAY), 973–993 (LLLS…SAFL), 1042–1062 (FETT…AFIF), 1077–1097 (IFSF…FSDF), and 1115–1135 (VLIL…EDSI).

It belongs to the cation transport ATPase (P-type) (TC 3.A.3) family. Type V subfamily.

The protein resides in the membrane. The enzyme catalyses ATP + H2O = ADP + phosphate + H(+). This Homo sapiens (Human) protein is Probable cation-transporting ATPase 13A5 (ATP13A5).